A 204-amino-acid polypeptide reads, in one-letter code: MIGRLCGTAEQIEDGRCLIDVSGVGYVVFCSARSLAALPAPPARATLLVETQVREDAITLFGFIDAAERDWFRLLTTIQGVGAKVALNLLSALPPDQLASAIAASDRGAITRAPGVGPKLAARLISELRERIAAMPTGSAFIPTGTAPPVAPPQGKLADALSALVNLGYRRAEAEAALSAVQAEAGEDAALDELIRGGLRRLAR.

The tract at residues 1–64 is domain I; the sequence is MIGRLCGTAE…EDAITLFGFI (64 aa). Residues 65-143 form a domain II region; that stretch reads DAAERDWFRL…AMPTGSAFIP (79 aa). The flexible linker stretch occupies residues 144–154; the sequence is TGTAPPVAPPQ. Residues 154–204 are domain III; that stretch reads QGKLADALSALVNLGYRRAEAEAALSAVQAEAGEDAALDELIRGGLRRLAR.

It belongs to the RuvA family. In terms of assembly, homotetramer. Forms an RuvA(8)-RuvB(12)-Holliday junction (HJ) complex. HJ DNA is sandwiched between 2 RuvA tetramers; dsDNA enters through RuvA and exits via RuvB. An RuvB hexamer assembles on each DNA strand where it exits the tetramer. Each RuvB hexamer is contacted by two RuvA subunits (via domain III) on 2 adjacent RuvB subunits; this complex drives branch migration. In the full resolvosome a probable DNA-RuvA(4)-RuvB(12)-RuvC(2) complex forms which resolves the HJ.

It is found in the cytoplasm. In terms of biological role, the RuvA-RuvB-RuvC complex processes Holliday junction (HJ) DNA during genetic recombination and DNA repair, while the RuvA-RuvB complex plays an important role in the rescue of blocked DNA replication forks via replication fork reversal (RFR). RuvA specifically binds to HJ cruciform DNA, conferring on it an open structure. The RuvB hexamer acts as an ATP-dependent pump, pulling dsDNA into and through the RuvAB complex. HJ branch migration allows RuvC to scan DNA until it finds its consensus sequence, where it cleaves and resolves the cruciform DNA. This is Holliday junction branch migration complex subunit RuvA from Acidiphilium cryptum (strain JF-5).